We begin with the raw amino-acid sequence, 338 residues long: Lipoate-protein ligase A (338 aa).

The region spanning P29–V216 is the BPL/LPL catalytic domain. Residues R71, G76–F79, and K134 each bind ATP. Position 134 (K134) interacts with (R)-lipoate.

It belongs to the LplA family. As to quaternary structure, monomer.

It localises to the cytoplasm. It carries out the reaction L-lysyl-[lipoyl-carrier protein] + (R)-lipoate + ATP = N(6)-[(R)-lipoyl]-L-lysyl-[lipoyl-carrier protein] + AMP + diphosphate + H(+). It functions in the pathway protein modification; protein lipoylation via exogenous pathway; protein N(6)-(lipoyl)lysine from lipoate: step 1/2. It participates in protein modification; protein lipoylation via exogenous pathway; protein N(6)-(lipoyl)lysine from lipoate: step 2/2. Its function is as follows. Catalyzes both the ATP-dependent activation of exogenously supplied lipoate to lipoyl-AMP and the transfer of the activated lipoyl onto the lipoyl domains of lipoate-dependent enzymes. This Salmonella choleraesuis (strain SC-B67) protein is Lipoate-protein ligase A.